A 356-amino-acid chain; its full sequence is Histidinol-phosphate aminotransferase (356 aa).

Position 214 is an N6-(pyridoxal phosphate)lysine (Lys-214).

Belongs to the class-II pyridoxal-phosphate-dependent aminotransferase family. Histidinol-phosphate aminotransferase subfamily. In terms of assembly, homodimer. The cofactor is pyridoxal 5'-phosphate.

The enzyme catalyses L-histidinol phosphate + 2-oxoglutarate = 3-(imidazol-4-yl)-2-oxopropyl phosphate + L-glutamate. The protein operates within amino-acid biosynthesis; L-histidine biosynthesis; L-histidine from 5-phospho-alpha-D-ribose 1-diphosphate: step 7/9. This chain is Histidinol-phosphate aminotransferase, found in Escherichia coli O127:H6 (strain E2348/69 / EPEC).